A 484-amino-acid polypeptide reads, in one-letter code: tRNA sulfurtransferase (484 aa).

In terms of domain architecture, THUMP spans 63–167; it reads QGIRDRLSCM…DQRLFVVHDQ (105 aa). Residues 185–186, lysine 267, glycine 289, and glutamine 298 contribute to the ATP site; that span reads LM. Cysteine 346 and cysteine 457 are oxidised to a cystine. Positions 405–483 constitute a Rhodanese domain; that stretch reads ALAGQVIIDI…GHANVRVYRP (79 aa). Cysteine 457 serves as the catalytic Cysteine persulfide intermediate.

It belongs to the ThiI family.

It is found in the cytoplasm. The catalysed reaction is [ThiI sulfur-carrier protein]-S-sulfanyl-L-cysteine + a uridine in tRNA + 2 reduced [2Fe-2S]-[ferredoxin] + ATP + H(+) = [ThiI sulfur-carrier protein]-L-cysteine + a 4-thiouridine in tRNA + 2 oxidized [2Fe-2S]-[ferredoxin] + AMP + diphosphate. The enzyme catalyses [ThiS sulfur-carrier protein]-C-terminal Gly-Gly-AMP + S-sulfanyl-L-cysteinyl-[cysteine desulfurase] + AH2 = [ThiS sulfur-carrier protein]-C-terminal-Gly-aminoethanethioate + L-cysteinyl-[cysteine desulfurase] + A + AMP + 2 H(+). It functions in the pathway cofactor biosynthesis; thiamine diphosphate biosynthesis. Functionally, catalyzes the ATP-dependent transfer of a sulfur to tRNA to produce 4-thiouridine in position 8 of tRNAs, which functions as a near-UV photosensor. Also catalyzes the transfer of sulfur to the sulfur carrier protein ThiS, forming ThiS-thiocarboxylate. This is a step in the synthesis of thiazole, in the thiamine biosynthesis pathway. The sulfur is donated as persulfide by IscS. The protein is tRNA sulfurtransferase of Pseudomonas syringae pv. tomato (strain ATCC BAA-871 / DC3000).